The following is a 174-amino-acid chain: Crossover junction endodeoxyribonuclease RuvC (174 aa).

Catalysis depends on residues D8, E67, and D139. D8, E67, and D139 together coordinate Mg(2+).

This sequence belongs to the RuvC family. Homodimer which binds Holliday junction (HJ) DNA. The HJ becomes 2-fold symmetrical on binding to RuvC with unstacked arms; it has a different conformation from HJ DNA in complex with RuvA. In the full resolvosome a probable DNA-RuvA(4)-RuvB(12)-RuvC(2) complex forms which resolves the HJ. Requires Mg(2+) as cofactor.

Its subcellular location is the cytoplasm. The enzyme catalyses Endonucleolytic cleavage at a junction such as a reciprocal single-stranded crossover between two homologous DNA duplexes (Holliday junction).. The RuvA-RuvB-RuvC complex processes Holliday junction (HJ) DNA during genetic recombination and DNA repair. Endonuclease that resolves HJ intermediates. Cleaves cruciform DNA by making single-stranded nicks across the HJ at symmetrical positions within the homologous arms, yielding a 5'-phosphate and a 3'-hydroxyl group; requires a central core of homology in the junction. The consensus cleavage sequence is 5'-(A/T)TT(C/G)-3'. Cleavage occurs on the 3'-side of the TT dinucleotide at the point of strand exchange. HJ branch migration catalyzed by RuvA-RuvB allows RuvC to scan DNA until it finds its consensus sequence, where it cleaves and resolves the cruciform DNA. This Pseudomonas paraeruginosa (strain DSM 24068 / PA7) (Pseudomonas aeruginosa (strain PA7)) protein is Crossover junction endodeoxyribonuclease RuvC.